Here is a 103-residue protein sequence, read N- to C-terminus: Histone H4, major (103 aa).

A compositionally biased stretch (gly residues) spans 1-12 (MAGGKGGKGMGK). The tract at residues 1-29 (MAGGKGGKGMGKVGAKRHSKRSNKASIEG) is disordered. N6-acetyllysine is present on residues K5, K8, K12, and K16. A compositionally biased stretch (basic residues) spans 14-23 (GAKRHSKRSN). Residues 16–21 (KRHSKR) mediate DNA binding.

It belongs to the histone H4 family. In terms of assembly, the nucleosome is a histone octamer containing two molecules each of H2A, H2B, H3 and H4 assembled in one H3-H4 heterotetramer and two H2A-H2B heterodimers. The octamer wraps approximately 147 bp of DNA.

The protein localises to the nucleus. The protein resides in the chromosome. Its function is as follows. Core component of nucleosome. Nucleosomes wrap and compact DNA into chromatin, limiting DNA accessibility to the cellular machineries which require DNA as a template. Histones thereby play a central role in transcription regulation, DNA repair, DNA replication and chromosomal stability. DNA accessibility is regulated via a complex set of post-translational modifications of histones, also called histone code, and nucleosome remodeling. This chain is Histone H4, major, found in Tetrahymena pyriformis.